The primary structure comprises 294 residues: Bifunctional protein FolD (294 aa).

NADP(+) contacts are provided by residues 166-168, Ser-195, and Ile-236; that span reads GRS.

This sequence belongs to the tetrahydrofolate dehydrogenase/cyclohydrolase family. As to quaternary structure, homodimer.

It carries out the reaction (6R)-5,10-methylene-5,6,7,8-tetrahydrofolate + NADP(+) = (6R)-5,10-methenyltetrahydrofolate + NADPH. The enzyme catalyses (6R)-5,10-methenyltetrahydrofolate + H2O = (6R)-10-formyltetrahydrofolate + H(+). Its pathway is one-carbon metabolism; tetrahydrofolate interconversion. Functionally, catalyzes the oxidation of 5,10-methylenetetrahydrofolate to 5,10-methenyltetrahydrofolate and then the hydrolysis of 5,10-methenyltetrahydrofolate to 10-formyltetrahydrofolate. The chain is Bifunctional protein FolD from Chloroherpeton thalassium (strain ATCC 35110 / GB-78).